The following is a 255-amino-acid chain: DNA repair protein RecO (255 aa).

Belongs to the RecO family.

Its function is as follows. Involved in DNA repair and RecF pathway recombination. The chain is DNA repair protein RecO from Listeria monocytogenes serotype 4b (strain CLIP80459).